The chain runs to 351 residues: Signal recognition particle receptor FtsY (351 aa).

GTP is bound by residues Gly-156–Thr-163, Asp-238–Arg-242, and Thr-302–Asp-305.

The protein belongs to the GTP-binding SRP family. FtsY subfamily. Part of the signal recognition particle protein translocation system, which is composed of SRP and FtsY. SRP is a ribonucleoprotein composed of Ffh and a 4.5S RNA molecule.

The protein resides in the cell membrane. It localises to the cytoplasm. The enzyme catalyses GTP + H2O = GDP + phosphate + H(+). Functionally, involved in targeting and insertion of nascent membrane proteins into the cytoplasmic membrane. Acts as a receptor for the complex formed by the signal recognition particle (SRP) and the ribosome-nascent chain (RNC). Interaction with SRP-RNC leads to the transfer of the RNC complex to the Sec translocase for insertion into the membrane, the hydrolysis of GTP by both Ffh and FtsY, and the dissociation of the SRP-FtsY complex into the individual components. This chain is Signal recognition particle receptor FtsY, found in Buchnera aphidicola subsp. Schizaphis graminum (strain Sg).